We begin with the raw amino-acid sequence, 156 residues long: MIALIQRVSQARVTVEGRTTGEIGAGLLALVCAERGDTEAQADRLLAKMLSYRVFSDADGKMNLPVQNMDGNGGAGGLLVVSQFTLAADTNSGTRPSFTPAASPEDGRRLYGYFVERARASHPDVQTGEFGAMMQVSLTNDGPVTFWLRVPPPGNA.

A Gly-cisPro motif, important for rejection of L-amino acids motif is present at residues 142–143 (GP).

The protein belongs to the DTD family. As to quaternary structure, homodimer.

It localises to the cytoplasm. It catalyses the reaction glycyl-tRNA(Ala) + H2O = tRNA(Ala) + glycine + H(+). The enzyme catalyses a D-aminoacyl-tRNA + H2O = a tRNA + a D-alpha-amino acid + H(+). Its function is as follows. An aminoacyl-tRNA editing enzyme that deacylates mischarged D-aminoacyl-tRNAs. Also deacylates mischarged glycyl-tRNA(Ala), protecting cells against glycine mischarging by AlaRS. Acts via tRNA-based rather than protein-based catalysis; rejects L-amino acids rather than detecting D-amino acids in the active site. By recycling D-aminoacyl-tRNA to D-amino acids and free tRNA molecules, this enzyme counteracts the toxicity associated with the formation of D-aminoacyl-tRNA entities in vivo and helps enforce protein L-homochirality. This chain is D-aminoacyl-tRNA deacylase, found in Cupriavidus pinatubonensis (strain JMP 134 / LMG 1197) (Cupriavidus necator (strain JMP 134)).